The sequence spans 198 residues: UPF0301 protein BDI_1431 (198 aa).

It belongs to the UPF0301 (AlgH) family.

The chain is UPF0301 protein BDI_1431 from Parabacteroides distasonis (strain ATCC 8503 / DSM 20701 / CIP 104284 / JCM 5825 / NCTC 11152).